Reading from the N-terminus, the 287-residue chain is Homoserine kinase (287 aa).

78–88 (PLSRGLGSSST) serves as a coordination point for ATP.

The protein belongs to the GHMP kinase family. Homoserine kinase subfamily.

The protein localises to the cytoplasm. The enzyme catalyses L-homoserine + ATP = O-phospho-L-homoserine + ADP + H(+). It functions in the pathway amino-acid biosynthesis; L-threonine biosynthesis; L-threonine from L-aspartate: step 4/5. In terms of biological role, catalyzes the ATP-dependent phosphorylation of L-homoserine to L-homoserine phosphate. This is Homoserine kinase from Lactobacillus gasseri (strain ATCC 33323 / DSM 20243 / BCRC 14619 / CIP 102991 / JCM 1131 / KCTC 3163 / NCIMB 11718 / NCTC 13722 / AM63).